The primary structure comprises 240 residues: Ribonuclease HII (240 aa).

Positions 27 to 226 (GPVAGVDEAG…GETRSLRLED (200 aa)) constitute an RNase H type-2 domain. 3 residues coordinate a divalent metal cation: D33, E34, and D127.

The protein belongs to the RNase HII family. The cofactor is Mn(2+). Mg(2+) is required as a cofactor.

It is found in the cytoplasm. The enzyme catalyses Endonucleolytic cleavage to 5'-phosphomonoester.. Functionally, endonuclease that specifically degrades the RNA of RNA-DNA hybrids. In Parafrankia sp. (strain EAN1pec), this protein is Ribonuclease HII.